The chain runs to 254 residues: Acetyl-coenzyme A carboxylase carboxyl transferase subunit beta (254 aa).

The CoA carboxyltransferase N-terminal domain maps to 1–254 (MWLRCPHCHQ…LLKTGSVANE (254 aa)). The Zn(2+) site is built by cysteine 5, cysteine 8, cysteine 23, and cysteine 26. The C4-type zinc-finger motif lies at 5 to 26 (CPHCHQLLFAKQLTQYAVCPNC).

The protein belongs to the AccD/PCCB family. Acetyl-CoA carboxylase is a heterohexamer composed of biotin carboxyl carrier protein (AccB), biotin carboxylase (AccC) and two subunits each of ACCase subunit alpha (AccA) and ACCase subunit beta (AccD). The cofactor is Zn(2+).

The protein localises to the cytoplasm. It carries out the reaction N(6)-carboxybiotinyl-L-lysyl-[protein] + acetyl-CoA = N(6)-biotinyl-L-lysyl-[protein] + malonyl-CoA. Its pathway is lipid metabolism; malonyl-CoA biosynthesis; malonyl-CoA from acetyl-CoA: step 1/1. Its function is as follows. Component of the acetyl coenzyme A carboxylase (ACC) complex. Biotin carboxylase (BC) catalyzes the carboxylation of biotin on its carrier protein (BCCP) and then the CO(2) group is transferred by the transcarboxylase to acetyl-CoA to form malonyl-CoA. The chain is Acetyl-coenzyme A carboxylase carboxyl transferase subunit beta from Limosilactobacillus reuteri (strain DSM 20016) (Lactobacillus reuteri).